Reading from the N-terminus, the 241-residue chain is Beta-nerve growth factor (241 aa).

Positions 1-18 (MSMLFYTLITALLIGIQA) are cleaved as a signal peptide. Positions 19–121 (APHTESNVPA…SFNRTHRSKR (103 aa)) are excised as a propeptide. Cystine bridges form between C136–C201, C179–C229, and C189–C231. Residue N166 is glycosylated (N-linked (GlcNAc...) asparagine). A 1-acyl-sn-glycero-3-phospho-(1D-myo-inositol)-binding residues include Y173 and K209. An a 1-acyl-sn-glycero-3-phospho-L-serine-binding site is contributed by K209.

It belongs to the NGF-beta family. As to quaternary structure, homodimer. The homodimer interacts with a single NTRK1 chain. The homodimer interacts with a single NGFR chain. The NGF dimer interacts with a single SORCS2 chain (via extracellular domain). The NGF precursor (proNGF) binds to a receptor complex formed by SORT1 and NGFR, which leads to NGF endocytosis. Both mature NGF and the immature NGF precursor (proNGF) interact with SORCS2 and with the heterodimer formed by SORCS2 and NGFR (via extracellular domains). The NGF precursor (proNGF) has much higher affinity for SORCS2 than mature NGF. The NGF precursor (proNGF) has much higher affinity for SORT1 than mature NGF. Interacts with ADAM10 in a divalent cation-dependent manner. Interacts with SORCS3.

Its subcellular location is the secreted. The protein resides in the endosome lumen. In terms of biological role, nerve growth factor is important for the development and maintenance of the sympathetic and sensory nervous systems. Extracellular ligand for the NTRK1 and NGFR receptors, activates cellular signaling cascades to regulate neuronal proliferation, differentiation and survival. The immature NGF precursor (proNGF) functions as a ligand for the heterodimeric receptor formed by SORCS2 and NGFR, and activates cellular signaling cascades that lead to inactivation of RAC1 and/or RAC2, reorganization of the actin cytoskeleton and neuronal growth cone collapse. In contrast to mature NGF, the precursor form (proNGF) promotes neuronal apoptosis (in vitro). Inhibits metalloproteinase-dependent proteolysis of platelet glycoprotein VI. Binds lysophosphatidylinositol and lysophosphatidylserine between the two chains of the homodimer. The lipid-bound form promotes histamine relase from mast cells, contrary to the lipid-free form. This is Beta-nerve growth factor (NGF) from Bos taurus (Bovine).